The primary structure comprises 62 residues: Large ribosomal subunit protein bL28 (62 aa).

Belongs to the bacterial ribosomal protein bL28 family.

The sequence is that of Large ribosomal subunit protein bL28 from Moorella thermoacetica (strain ATCC 39073 / JCM 9320).